The sequence spans 55 residues: Large ribosomal subunit protein bL33A (55 aa).

It belongs to the bacterial ribosomal protein bL33 family.

The protein is Large ribosomal subunit protein bL33A of Rhodococcus jostii (strain RHA1).